The following is a 495-amino-acid chain: Polybrominated aromatic compounds synthase (495 aa).

Cys-437 contacts heme.

The protein belongs to the cytochrome P450 family. Heme serves as cofactor.

Functionally, cytochrome P450 protein involved in the biosynthesis of polybrominated aromatic organic compounds. In the presence of ferredoxin, ferredoxin reductase and NADH, catalyzes the coupling of bromophenols and bromopyrroles, forming various polybrominated biphenyls and hydroxylated polybrominated diphenyl ethers (OH-BDE). Can also mediate the heterocoupling of 3,5-dibromocatechol, forming six different compounds, including polybrominated dibenzo-p-dioxins, which are among the most toxic molecules known to man. This Marinomonas mediterranea (strain ATCC 700492 / JCM 21426 / NBRC 103028 / MMB-1) protein is Polybrominated aromatic compounds synthase.